The chain runs to 653 residues: Sodium-dependent phosphate transporter 2 (653 aa).

The Extracellular portion of the chain corresponds to 1 to 5 (MVLDE). The chain crosses the membrane as a helical span at residues 6 to 26 (YMWMVIVGFIIAFVLAFSVGA). At 27–46 (NDVANSFGTAVGSGVVTLRQ) the chain is on the cytoplasmic side. The helical transmembrane segment at 47–67 (ACILASIFETIGSVLLGAKVG) threads the bilayer. The Extracellular portion of the chain corresponds to 68–86 (ETIRKGIIDVNLYNNTVDL). N-linked (GlcNAc...) asparagine glycosylation occurs at N81. A helical membrane pass occupies residues 87–107 (LMAGEVSAMVGSAVWQLIASF). Over 108 to 109 (LK) the chain is Cytoplasmic. Residues 110–130 (LPVSGTHCIVGATIGFSLVAV) traverse the membrane as a helical segment. The Extracellular portion of the chain corresponds to 131-142 (GAHSVQWMQLVK). A helical transmembrane segment spans residues 143-163 (IVASWFISPLLSGLMSGALFL). Residues 164–187 (MIKFFILNKEDPVPNGLKALPVFY) are Cytoplasmic-facing. Residues 188–208 (AATIGINVFSILFTGAPLLGL) traverse the membrane as a helical segment. At 209–217 (QTFPVWATA) the chain is on the extracellular side. The chain crosses the membrane as a helical span at residues 218–238 (LLSVGIAIVFALVVWFFVCPW). Residues 239–483 (MKKKIASRLK…EDKEEKDKSQ (245 aa)) are Cytoplasmic-facing. The tract at residues 275-310 (LPGAKGNDESVLPLTSSSPDAAVSSESVSNGNTRVP) is disordered. A compositionally biased stretch (low complexity) spans 290–303 (SSSPDAAVSSESVS). Residues 484–504 (VHLLFHFLQILTACFGSFAHG) traverse the membrane as a helical segment. The Extracellular portion of the chain corresponds to 505–532 (GNDVSNAIGPLVALWLIYQQGGVMQEAS). The helical transmembrane segment at 533–553 (TPVWLLLYGGVGICAGLWVWG) threads the bilayer. Residues 554–572 (RRVIQTMGKDLTPITPSSG) lie on the Cytoplasmic side of the membrane. Residues 573-587 (FTIELASAFTVVVAS) form a helical membrane-spanning segment. Residues 588–594 (NIGLPIS) lie on the Extracellular side of the membrane. Residues 595–610 (TTHCKVGSVVAVGWIR) form a helical membrane-spanning segment. Residues 611–622 (SRKAVDWRLFRN) lie on the Cytoplasmic side of the membrane. The helical transmembrane segment at 623 to 643 (IFLAWFVTVPVAGLFSAGVMA) threads the bilayer. Residues 644–653 (ILQYGILPYV) are Extracellular-facing.

It belongs to the inorganic phosphate transporter (PiT) (TC 2.A.20) family. As to quaternary structure, homodimer.

It is found in the cell membrane. The protein localises to the apical cell membrane. The catalysed reaction is 2 Na(+)(out) + phosphate(out) = 2 Na(+)(in) + phosphate(in). Functionally, sodium-phosphate symporter which preferentially transports the monovalent form of phosphate with a stoichiometry of two sodium ions per phosphate ion. In Xenopus laevis (African clawed frog), this protein is Sodium-dependent phosphate transporter 2 (slc20a2).